Reading from the N-terminus, the 698-residue chain is Dual trans-enoyl reductase/FAD-dependent monooxygenase tazHJ (698 aa).

NADP(+) is bound by residues Ser-54 to Thr-57, Ser-78 to His-81, Tyr-96, and Ile-279 to Ala-280. 3 residues coordinate FAD: Glu-299, Gly-312, and Arg-372. Arg-455 is a catalytic residue. FAD-binding residues include Asp-571 and Ala-584.

The protein in the N-terminal section; belongs to the zinc-containing alcohol dehydrogenase family. It in the C-terminal section; belongs to the paxM FAD-dependent monooxygenase family.

Its pathway is secondary metabolite biosynthesis. Functionally, dual trans-enoyl reductase/FAD-dependent monooxygenase; part of the gene cluster that mediates the biosynthesis of azaterrilone A and other azaphilones, a class of fungal metabolites characterized by a highly oxygenated pyrano-quinone bicyclic core and exhibiting a broad range of bioactivities. The first step of the pathway begins with the non-reducing polyketide synthase tazA that assembles one acetyl-CoA starter unit, five malonyl-CoA units, and catalyzes a series of Claisen condensations, methylation, PT-mediated cyclization, and finally releases the first hexaketide precursor through the R-domain. The tazA product then undergoes reduction on its terminal ketone and the following pyran-ring formation by yet undetermined enzyme(s). Dehydration and enoyl reduction, possibly involving the trans-enoyl reductase tazE leads to the next intermediate. TazD is predicted as an acetyltransferase and might catalyze the acetylation steps leading to the synthesis of azaterrilone A. Azaterrilone A is not the final product of the taz pathway and both the highly reducing polyketide synthase tazB and the dual enzyme tazHJ catalyze late steps of the pathway, leading to the production of the 2 final stereoisomers that contain additional polyketide modification whose structures have still to be determined. In Aspergillus terreus (strain NIH 2624 / FGSC A1156), this protein is Dual trans-enoyl reductase/FAD-dependent monooxygenase tazHJ.